The following is a 565-amino-acid chain: MEPKTKKQRSLYIPYAGPVLLEFPLLNKGSAFSMEERRNFNLLGLLPEVVETIEEQAERAWIQYQGFKTEIDKHIYLRNIQDTNETLFYRLVNNHLDEMMPVIYTPTVGAACERFSEIYRRSRGVFISYQNRHNMDDILQNVPNHNIKVIVVTDGERILGLGDQGIGGMGIPIGKLSLYTACGGISPAYTLPVVLDVGTNNQQLLNDPLYMGWRNPRITDDEYYEFVDEFIQAVKQRWPDVLLQFEDFAQKNAMPLLNRYRNEICSFNDDIQGTAAVTVGTLIAASRAAGGQLSEKKIVFLGAGSAGCGIAEMIIAQTPREGLSEEAARQKVFMVDRFGLLTDKMPNLLPFQTKLVQKRENLSDWDTDSDVLSLLDVVRNVKPDILIGVSGQTGLFTEEIIREMHKHCPRPIVMPLSNPTSRVEATPQDIIAWTEGNALVATGSPFNPVVWKDKIYPIAQCNNAFIFPGIGLGVIASGASRITDEMLMSASETLAQYSPLVLNGEGLVLPELKDIQKVSRAIAFAVGKMAQQQGVAVKTSAEALQQAIDDNFWQAEYRDYRRTSI.

Catalysis depends on tyrosine 104, which acts as the Proton donor. Arginine 157 provides a ligand contact to NAD(+). The active-site Proton acceptor is lysine 175. Glutamate 246, aspartate 247, and aspartate 270 together coordinate a divalent metal cation. Positions 270 and 418 each coordinate NAD(+).

It belongs to the malic enzymes family. As to quaternary structure, homotetramer. Mg(2+) serves as cofactor. It depends on Mn(2+) as a cofactor.

It catalyses the reaction (S)-malate + NAD(+) = pyruvate + CO2 + NADH. It carries out the reaction oxaloacetate + H(+) = pyruvate + CO2. This Shigella sonnei (strain Ss046) protein is NAD-dependent malic enzyme.